The sequence spans 50 residues: MAETINKSGRGVNVCKRCGRKQGLVRKYDIYLCRHCFREIAHDMGFEKYS.

Residues cysteine 15, cysteine 18, cysteine 33, and cysteine 36 each contribute to the Zn(2+) site.

The protein belongs to the universal ribosomal protein uS14 family. Zinc-binding uS14 subfamily. Part of the 30S ribosomal subunit. The cofactor is Zn(2+).

In terms of biological role, binds 16S rRNA, required for the assembly of 30S particles. The chain is Small ribosomal subunit protein uS14 from Methanosarcina barkeri (strain Fusaro / DSM 804).